The sequence spans 562 residues: Probable Xaa-Pro aminopeptidase PEPP (562 aa).

Residues D358, D369, E492, and E532 each coordinate Mn(2+).

The protein belongs to the peptidase M24B family. Mn(2+) is required as a cofactor.

The catalysed reaction is Release of any N-terminal amino acid, including proline, that is linked to proline, even from a dipeptide or tripeptide.. Catalyzes the removal of a penultimate prolyl residue from the N-termini of peptides. The sequence is that of Probable Xaa-Pro aminopeptidase PEPP (PEPP) from Leptosphaeria maculans (strain JN3 / isolate v23.1.3 / race Av1-4-5-6-7-8) (Blackleg fungus).